Reading from the N-terminus, the 342-residue chain is Anthranilate phosphoribosyltransferase (342 aa).

Residues Gly74, 77-78 (GD), Thr82, 84-87 (NVST), 101-109 (KHGNRSVSG), and Ser113 contribute to the 5-phospho-alpha-D-ribose 1-diphosphate site. Gly74 contacts anthranilate. A Mg(2+)-binding site is contributed by Ser86. Asn104 contributes to the anthranilate binding site. An anthranilate-binding site is contributed by Arg159. Residues Asp218 and Glu219 each contribute to the Mg(2+) site.

The protein belongs to the anthranilate phosphoribosyltransferase family. Homodimer. Mg(2+) serves as cofactor.

The catalysed reaction is N-(5-phospho-beta-D-ribosyl)anthranilate + diphosphate = 5-phospho-alpha-D-ribose 1-diphosphate + anthranilate. It participates in amino-acid biosynthesis; L-tryptophan biosynthesis; L-tryptophan from chorismate: step 2/5. Its function is as follows. Catalyzes the transfer of the phosphoribosyl group of 5-phosphorylribose-1-pyrophosphate (PRPP) to anthranilate to yield N-(5'-phosphoribosyl)-anthranilate (PRA). This Sulfolobus acidocaldarius (strain ATCC 33909 / DSM 639 / JCM 8929 / NBRC 15157 / NCIMB 11770) protein is Anthranilate phosphoribosyltransferase.